Reading from the N-terminus, the 356-residue chain is Phenylalanine--tRNA ligase alpha subunit (356 aa).

E260 lines the Mg(2+) pocket.

The protein belongs to the class-II aminoacyl-tRNA synthetase family. Phe-tRNA synthetase alpha subunit type 1 subfamily. Tetramer of two alpha and two beta subunits. Mg(2+) serves as cofactor.

It localises to the cytoplasm. The catalysed reaction is tRNA(Phe) + L-phenylalanine + ATP = L-phenylalanyl-tRNA(Phe) + AMP + diphosphate + H(+). In Gluconacetobacter diazotrophicus (strain ATCC 49037 / DSM 5601 / CCUG 37298 / CIP 103539 / LMG 7603 / PAl5), this protein is Phenylalanine--tRNA ligase alpha subunit.